A 735-amino-acid chain; its full sequence is Ion-translocating oxidoreductase complex subunit C (735 aa).

4Fe-4S ferredoxin-type domains are found at residues 368–397 and 407–436; these read MGAP…QQLY and KATA…VQYF. [4Fe-4S] cluster is bound by residues Cys-377, Cys-380, Cys-383, Cys-387, Cys-416, Cys-419, Cys-422, and Cys-426. Residues 534 to 711 are disordered; sequence QARAKQAAHP…EPVEPADPRK (178 aa).

It belongs to the 4Fe4S bacterial-type ferredoxin family. RnfC subfamily. The complex is composed of six subunits: RsxA, RsxB, RsxC, RsxD, RsxE and RsxG. It depends on [4Fe-4S] cluster as a cofactor.

It localises to the cell inner membrane. Functionally, part of a membrane-bound complex that couples electron transfer with translocation of ions across the membrane. Required to maintain the reduced state of SoxR. The protein is Ion-translocating oxidoreductase complex subunit C of Salmonella paratyphi A (strain ATCC 9150 / SARB42).